The sequence spans 459 residues: Nucleobindin-1 (459 aa).

The signal sequence occupies residues 1–25; the sequence is MPTSVPRGAPFLLLPPLLMLSAVLA. A Phosphoserine modification is found at serine 85. At threonine 147 the chain carries Phosphothreonine. Residues 149–217 are a coiled coil; that stretch reads EARDLELLIQ…QQRRHREHPK (69 aa). The DNA-binding element occupies 171 to 217; sequence HHEEFKRYEMLKEHERRRYLESLGEEQRKEAERKLQEQQRRHREHPK. Residues 192–209 are compositionally biased toward basic and acidic residues; sequence SLGEEQRKEAERKLQEQQ. The interval 192–220 is disordered; the sequence is SLGEEQRKEAERKLQEQQRRHREHPKVNV. The binds to GNAI2 and GNAI3 stretch occupies residues 227 to 320; that stretch reads LKEVWEELDG…VTLEEFLAST (94 aa). EF-hand domains lie at 239 to 274 and 291 to 326; these read PNRF…ELEK and ERLR…KEFG. Ca(2+) is bound by residues aspartate 252, asparagine 254, aspartate 256, glutamate 263, aspartate 304, asparagine 306, aspartate 308, and glutamate 315. The GBA motif lies at 302 to 332; it reads NVDTNQDRLVTLEEFLASTQRKEFGETAEGW. A coiled-coil region spans residues 340–407; the sequence is AYTEEELKRF…RKQQQQEQSA (68 aa). The residue at position 368 (serine 368) is a Phosphoserine. The interval 393 to 459 is disordered; the sequence is LQMEQRKQQQ…VLPQLDSQHL (67 aa). Residues 433 to 445 are compositionally biased toward basic and acidic residues; sequence DQKDVPASEKKVP. Serine 456 carries the phosphoserine modification.

This sequence belongs to the nucleobindin family. As to quaternary structure, interacts (via GBA motif) with guanine nucleotide-binding protein G(i) alpha subunits GNAI1, GNAI2 and GNAI3 with higher affinity for GNAI1 and GNAI3 than for GNAI2. Preferentially interacts with inactive rather than active GNAI3. Interaction with GNAI3 is inhibited when NUCB1 binds calcium, probably due to a conformational change which renders the GBA motif inaccessible. In terms of tissue distribution, minor constituent of the mineralized matrix of bone. Detected in calvaria, rib cartilage, liver, kidney, spleen, brain, lung, skeletal and heart muscle with highest expression in calvaria and approximately half the amount in kidney, liver and brain.

It localises to the golgi apparatus. The protein localises to the cis-Golgi network membrane. Its subcellular location is the cytoplasm. The protein resides in the secreted. Its function is as follows. Major calcium-binding protein of the Golgi which may have a role in calcium homeostasis. Acts as a non-receptor guanine nucleotide exchange factor which binds to and activates alpha subunits of guanine nucleotide-binding proteins (G proteins). The chain is Nucleobindin-1 (Nucb1) from Rattus norvegicus (Rat).